We begin with the raw amino-acid sequence, 408 residues long: NADH-quinone oxidoreductase subunit D (408 aa).

Belongs to the complex I 49 kDa subunit family. As to quaternary structure, NDH-1 is composed of 14 different subunits. Subunits NuoB, C, D, E, F, and G constitute the peripheral sector of the complex.

The protein resides in the cell inner membrane. The enzyme catalyses a quinone + NADH + 5 H(+)(in) = a quinol + NAD(+) + 4 H(+)(out). In terms of biological role, NDH-1 shuttles electrons from NADH, via FMN and iron-sulfur (Fe-S) centers, to quinones in the respiratory chain. The immediate electron acceptor for the enzyme in this species is believed to be ubiquinone. Couples the redox reaction to proton translocation (for every two electrons transferred, four hydrogen ions are translocated across the cytoplasmic membrane), and thus conserves the redox energy in a proton gradient. This Wolinella succinogenes (strain ATCC 29543 / DSM 1740 / CCUG 13145 / JCM 31913 / LMG 7466 / NCTC 11488 / FDC 602W) (Vibrio succinogenes) protein is NADH-quinone oxidoreductase subunit D.